A 75-amino-acid chain; its full sequence is Large ribosomal subunit protein bL31 (75 aa).

Residues C16, C18, C37, and C40 each coordinate Zn(2+).

It belongs to the bacterial ribosomal protein bL31 family. Type A subfamily. In terms of assembly, part of the 50S ribosomal subunit. The cofactor is Zn(2+).

Binds the 23S rRNA. This is Large ribosomal subunit protein bL31 from Baumannia cicadellinicola subsp. Homalodisca coagulata.